Reading from the N-terminus, the 211-residue chain is Large ribosomal subunit protein uL3 (211 aa).

The segment at 130-154 (RGPMAHGSKFHRHQGSNGSATTPGR) is disordered.

This sequence belongs to the universal ribosomal protein uL3 family. Part of the 50S ribosomal subunit. Forms a cluster with proteins L14 and L19.

Its function is as follows. One of the primary rRNA binding proteins, it binds directly near the 3'-end of the 23S rRNA, where it nucleates assembly of the 50S subunit. This Lachnospira eligens (strain ATCC 27750 / DSM 3376 / VPI C15-48 / C15-B4) (Eubacterium eligens) protein is Large ribosomal subunit protein uL3.